We begin with the raw amino-acid sequence, 241 residues long: GPI-anchored hemophore RBT5 (241 aa).

The first 20 residues, 1 to 20, serve as a signal peptide directing secretion; sequence MLALSLLSIVSIASAAGVTA. One can recognise a CFEM domain in the interval 26 to 137; the sequence is NPYTIFPSVA…DALAKAADAA (112 aa). 4 disulfide bridges follow: C54-C94, C58-C89, C68-C75, and C77-C110. D72 contacts heme. 2 stretches are compositionally biased toward low complexity: residues 140–154 and 163–182; these read TTAESTTAESTAAET and KETTAAETSKAAESSAPAET. The tract at residues 140–210 is disordered; that stretch reads TTAESTTAES…SVAQSSSSAA (71 aa). Residues 183 to 199 show a composition bias toward basic and acidic residues; sequence SKAEETSKAAETTKAEE. Low complexity predominate over residues 200–210; it reads SSVAQSSSSAA. The GPI-anchor amidated asparagine moiety is linked to residue N221. A propeptide spans 222–241 (removed in mature form); sequence AGNMPAVAIGGVIAAVAALF.

The protein belongs to the RBT5 family. Interacts with PGA7. Post-translationally, the GPI-anchor is attached to the protein in the endoplasmic reticulum and serves to target the protein to the cell surface. There, the glucosamine-inositol phospholipid moiety is cleaved off and the GPI-modified mannoprotein is covalently attached via its lipidless GPI glycan remnant to the 1,6-beta-glucan of the outer cell wall layer. Mannosylated.

The protein localises to the secreted. The protein resides in the cell wall. It is found in the cell membrane. GPI-linked hyphal surface heme-binding protein involved in heme-iron utilization. Heme transfer occurs between PGA7, RBT5 and CSA2 supporting a model in which the 3 CFEM proteins cooperate in a heme-acquisition system and form a cross-cell wall heme-transfer cascade. The ability to acquire iron from host tissues is a major virulence factor of pathogenic microorganisms. Required for biofilm formation. The chain is GPI-anchored hemophore RBT5 from Candida albicans (strain SC5314 / ATCC MYA-2876) (Yeast).